A 277-amino-acid polypeptide reads, in one-letter code: Large ribosomal subunit protein uL2c (277 aa).

A disordered region spans residues 226 to 249 (NPIDHPHGGGEGRAPIGREKPLTP). Residues 229–246 (DHPHGGGEGRAPIGREKP) show a composition bias toward basic and acidic residues.

This sequence belongs to the universal ribosomal protein uL2 family. As to quaternary structure, part of the 50S ribosomal subunit.

The protein resides in the plastid. It localises to the chloroplast. The protein is Large ribosomal subunit protein uL2c (rpl2) of Physcomitrium patens (Spreading-leaved earth moss).